A 659-amino-acid chain; its full sequence is MERINFIFGIHNHQPLGNFGWVFEEAYNRSYRPFMEILEEFPEMKVNVHFSGPLLEWIEENKPDYLDLLRSLIKRGQLEIVVAGFYEPVLAAIPKEDRLVQIEMLKDYARKLGYDAKGVWLTERVWQPELVKSLREAGIEYVVVDDYHFMSAGLSKEELFWPYYTEDGGEVITVFPIDEKLRYLIPFRPVKKTIEYLESLTSDDPSKVAVFHDDGEKFGVWPGTYEWVYEKGWLREFFDAITSNEKINLMTYSEYLSKFTPRGLVYLPIASYFEMSEWSLPAKQAKLFVEFVEQLKEEGKFEKYRVFVRGGIWKNFFFKYPESNFMHKRMLMVSKAVRDNPEARKYILKAQCNDAYWHGVFGGIYLPHLRRTVWENIIKAQRYLKPENKILDVDFDGRAEIMVENDGFIATIKPHYGGSIFELSSKRKAVNYNDVLPRRWEHYHEVPEATKPEKESEEGIASIHELGKQIPEEIRRELAYDWQLRAILQDHFIKPEETLDNYRLVKYHELGDFVNQPYEYEMIENGVKLWREGGVYAEEKIPARVEKKIELTEDGFIAKYRVLLEKPYKALFGVEINLAVHSVMEKPEEFEAKEFEVNDPYGIGKVRIELDKAAKVWKFPIKTLSQSEAGWDFIQQGVSYTMLFPIEKELEFTVRFREL.

Residue Glu123 is the Nucleophile of the active site. Asp214 functions as the Proton donor in the catalytic mechanism.

The protein belongs to the glycosyl hydrolase 57 family. Homodimer.

It catalyses the reaction Transfers a segment of a (1-&gt;4)-alpha-D-glucan to a new position in an acceptor, which may be glucose or a (1-&gt;4)-alpha-D-glucan.. Inhibited by p-chloromercuribenzoic acid, monoiodoacetic acid, mercury and nickel ions. Functionally, catalyzes the transglycosylation of maltooligosaccharides, yielding maltooligosaccharides of various lengths and glucose. Maltose and glucose can be used as acceptors in the transfer reaction. This is 4-alpha-glucanotransferase (jgt) from Thermococcus litoralis (strain ATCC 51850 / DSM 5473 / JCM 8560 / NS-C).